A 145-amino-acid polypeptide reads, in one-letter code: Putative phosphatidylglycerol/phosphatidylinositol transfer protein DDB_G0282179 (145 aa).

A signal peptide spans 1 to 20; the sequence is MIKTILLLLINFMLILIVNG. Asparagine 134 carries an N-linked (GlcNAc...) asparagine glycan.

It belongs to the NPC2 family. As to quaternary structure, monomer.

Functionally, catalyzes the intermembrane transfer of phosphatidylglycerol and phosphatidylinositol. The chain is Putative phosphatidylglycerol/phosphatidylinositol transfer protein DDB_G0282179 from Dictyostelium discoideum (Social amoeba).